The sequence spans 378 residues: Cobalt-precorrin-5B C(1)-methyltransferase (378 aa).

This sequence belongs to the CbiD family.

The enzyme catalyses Co-precorrin-5B + S-adenosyl-L-methionine = Co-precorrin-6A + S-adenosyl-L-homocysteine. It functions in the pathway cofactor biosynthesis; adenosylcobalamin biosynthesis; cob(II)yrinate a,c-diamide from sirohydrochlorin (anaerobic route): step 6/10. In terms of biological role, catalyzes the methylation of C-1 in cobalt-precorrin-5B to form cobalt-precorrin-6A. This Methanococcus aeolicus (strain ATCC BAA-1280 / DSM 17508 / OCM 812 / Nankai-3) protein is Cobalt-precorrin-5B C(1)-methyltransferase.